The following is an 80-amino-acid chain: U1-nemetoxin-Csp1a (80 aa).

A signal peptide spans 1-20; that stretch reads MKYFVVFCVLIIAVAAFTSA. A propeptide spanning residues 21-41 is cleaved from the precursor; that stretch reads AEDGEVFEENPLEFPKTIQKR. Cystine bridges form between cysteine 42–cysteine 56, cysteine 49–cysteine 60, cysteine 55–cysteine 77, and cysteine 66–cysteine 73.

This sequence belongs to the neurotoxin 13 (insecticidal toxin ABC) family. 02 (Calisoga) subfamily. Expressed by the venom gland.

It localises to the secreted. In terms of biological role, causes paralysis to insect larvae (H.virescens). This toxin is active only on insects. This is U1-nemetoxin-Csp1a from Calisoga sp. (Spider).